Consider the following 268-residue polypeptide: Ribosomal RNA small subunit methyltransferase A (268 aa).

Positions 17, 19, 44, 65, 89, and 110 each coordinate S-adenosyl-L-methionine.

It belongs to the class I-like SAM-binding methyltransferase superfamily. rRNA adenine N(6)-methyltransferase family. RsmA subfamily.

It is found in the cytoplasm. It carries out the reaction adenosine(1518)/adenosine(1519) in 16S rRNA + 4 S-adenosyl-L-methionine = N(6)-dimethyladenosine(1518)/N(6)-dimethyladenosine(1519) in 16S rRNA + 4 S-adenosyl-L-homocysteine + 4 H(+). Functionally, specifically dimethylates two adjacent adenosines (A1518 and A1519) in the loop of a conserved hairpin near the 3'-end of 16S rRNA in the 30S particle. May play a critical role in biogenesis of 30S subunits. The sequence is that of Ribosomal RNA small subunit methyltransferase A from Acidithiobacillus ferrooxidans (strain ATCC 53993 / BNL-5-31) (Leptospirillum ferrooxidans (ATCC 53993)).